The primary structure comprises 89 residues: Small ribosomal subunit protein uS15 (89 aa).

This sequence belongs to the universal ribosomal protein uS15 family. Part of the 30S ribosomal subunit. Forms a bridge to the 50S subunit in the 70S ribosome, contacting the 23S rRNA.

One of the primary rRNA binding proteins, it binds directly to 16S rRNA where it helps nucleate assembly of the platform of the 30S subunit by binding and bridging several RNA helices of the 16S rRNA. Functionally, forms an intersubunit bridge (bridge B4) with the 23S rRNA of the 50S subunit in the ribosome. This Pseudarthrobacter chlorophenolicus (strain ATCC 700700 / DSM 12829 / CIP 107037 / JCM 12360 / KCTC 9906 / NCIMB 13794 / A6) (Arthrobacter chlorophenolicus) protein is Small ribosomal subunit protein uS15.